A 283-amino-acid polypeptide reads, in one-letter code: Urease accessory protein UreD (283 aa).

It belongs to the UreD family. In terms of assembly, ureD, UreF and UreG form a complex that acts as a GTP-hydrolysis-dependent molecular chaperone, activating the urease apoprotein by helping to assemble the nickel containing metallocenter of UreC. The UreE protein probably delivers the nickel.

It localises to the cytoplasm. In terms of biological role, required for maturation of urease via the functional incorporation of the urease nickel metallocenter. This is Urease accessory protein UreD from Rhodopseudomonas palustris (strain BisB5).